Reading from the N-terminus, the 167-residue chain is Translationally-controlled tumor protein homolog (167 aa).

Residues 1-167 (MIIFTDVISG…WKHGVSEDKI (167 aa)) enclose the TCTP domain.

Belongs to the TCTP family.

Its subcellular location is the cytoplasm. The protein resides in the cytoskeleton. In terms of biological role, involved in protein synthesis. Involved in microtubule stabilization. The polypeptide is Translationally-controlled tumor protein homolog (Debaryomyces hansenii (strain ATCC 36239 / CBS 767 / BCRC 21394 / JCM 1990 / NBRC 0083 / IGC 2968) (Yeast)).